We begin with the raw amino-acid sequence, 196 residues long: Prefoldin subunit 3 (196 aa).

An N-acetylalanine modification is found at A2. An N6-acetyllysine modification is found at K58.

Belongs to the prefoldin subunit alpha family. Heterohexamer of two PFD-alpha type and four PFD-beta type subunits. Binds to the C-terminal part of VHL.

Its subcellular location is the cytoplasm. The protein localises to the nucleus. Its function is as follows. Binds specifically to cytosolic chaperonin (c-CPN) and transfers target proteins to it. Binds to nascent polypeptide chain and promotes folding in an environment in which there are many competing pathways for nonnative proteins. In Mus musculus (Mouse), this protein is Prefoldin subunit 3 (Vbp1).